Reading from the N-terminus, the 280-residue chain is Aspartate/glutamate leucyltransferase (280 aa).

The protein belongs to the R-transferase family. Bpt subfamily.

It is found in the cytoplasm. The enzyme catalyses N-terminal L-glutamyl-[protein] + L-leucyl-tRNA(Leu) = N-terminal L-leucyl-L-glutamyl-[protein] + tRNA(Leu) + H(+). The catalysed reaction is N-terminal L-aspartyl-[protein] + L-leucyl-tRNA(Leu) = N-terminal L-leucyl-L-aspartyl-[protein] + tRNA(Leu) + H(+). Its function is as follows. Functions in the N-end rule pathway of protein degradation where it conjugates Leu from its aminoacyl-tRNA to the N-termini of proteins containing an N-terminal aspartate or glutamate. The protein is Aspartate/glutamate leucyltransferase of Cereibacter sphaeroides (strain KD131 / KCTC 12085) (Rhodobacter sphaeroides).